The primary structure comprises 295 residues: uncharacterized protein (295 aa).

An N-terminal signal peptide occupies residues Met-1–Ala-19. Residues Lys-274–Lys-295 are disordered. The segment covering Asn-276–Lys-288 has biased composition (low complexity).

This is an uncharacterized protein from Rickettsia typhi (strain ATCC VR-144 / Wilmington).